The sequence spans 299 residues: Bifunctional protein FolD (299 aa).

Residues 168–170 (GRS), Ser-193, and Ile-234 each bind NADP(+).

It belongs to the tetrahydrofolate dehydrogenase/cyclohydrolase family. Homodimer.

The enzyme catalyses (6R)-5,10-methylene-5,6,7,8-tetrahydrofolate + NADP(+) = (6R)-5,10-methenyltetrahydrofolate + NADPH. It carries out the reaction (6R)-5,10-methenyltetrahydrofolate + H2O = (6R)-10-formyltetrahydrofolate + H(+). It participates in one-carbon metabolism; tetrahydrofolate interconversion. Functionally, catalyzes the oxidation of 5,10-methylenetetrahydrofolate to 5,10-methenyltetrahydrofolate and then the hydrolysis of 5,10-methenyltetrahydrofolate to 10-formyltetrahydrofolate. The chain is Bifunctional protein FolD from Brucella anthropi (strain ATCC 49188 / DSM 6882 / CCUG 24695 / JCM 21032 / LMG 3331 / NBRC 15819 / NCTC 12168 / Alc 37) (Ochrobactrum anthropi).